The sequence spans 1050 residues: Sentrin-specific protease 7 (1050 aa).

Disordered stretches follow at residues 1-28, 183-288, and 304-365; these read MDKR…SSDL, PPVT…DVKY, and RRLR…KSDF. Ser-11, Ser-12, Ser-13, and Ser-25 each carry phosphoserine. Residues 196 to 211 show a composition bias toward low complexity; it reads LQSEQLSSSSDGSLES. The span at 259–271 shows a compositional bias: polar residues; sequence ISDTQPEDLNSGS. The segment covering 273 to 288 has biased composition (basic and acidic residues); the sequence is GCDHLEQESRNKDVKY. The segment covering 310–320 has biased composition (polar residues); sequence LPDSQYCTSLD. Basic and acidic residues-rich tracts occupy residues 321-331 and 338-365; these read KSTEQTKKQED and EFEK…KSDF. Phosphoserine is present on residues Ser-373, Ser-433, Ser-443, and Ser-444. Positions 443-476 are disordered; the sequence is SSDEEGPVEHKSSEILKLQSKQDRETTNENESTS. Residues 449 to 469 are compositionally biased toward basic and acidic residues; the sequence is PVEHKSSEILKLQSKQDRETT. A protease region spans residues 760–1050; the sequence is LGVTNEDLEC…HLQQQKGSSS (291 aa). Active-site residues include His-860 and Asp-939. Cys-992 acts as the Nucleophile in catalysis.

The protein belongs to the peptidase C48 family.

It localises to the cytoplasm. In terms of biological role, protease that acts as a positive regulator of the cGAS-STING pathway by catalyzing desumoylation of CGAS. Desumoylation of CGAS promotes DNA-binding activity of CGAS, subsequent oligomerization and activation. Deconjugates SUMO2 and SUMO3 from targeted proteins, but not SUMO1. Catalyzes the deconjugation of poly-SUMO2 and poly-SUMO3 chains. Has very low efficiency in processing full-length SUMO proteins to their mature forms. The chain is Sentrin-specific protease 7 from Homo sapiens (Human).